Reading from the N-terminus, the 192-residue chain is Protein Syd (192 aa).

Belongs to the Syd family.

The protein resides in the cell inner membrane. Interacts with the SecY protein in vivo. May bind preferentially to an uncomplexed state of SecY, thus functioning either as a chelating agent for excess SecY in the cell or as a regulatory factor that negatively controls the translocase function. This Hahella chejuensis (strain KCTC 2396) protein is Protein Syd.